We begin with the raw amino-acid sequence, 274 residues long: Glutamate racemase (274 aa).

Residues 9–10 (DS) and 41–42 (YG) each bind substrate. C73 acts as the Proton donor/acceptor in catalysis. 74 to 75 (NT) provides a ligand contact to substrate. C183 acts as the Proton donor/acceptor in catalysis. 184–185 (TH) lines the substrate pocket.

Belongs to the aspartate/glutamate racemases family.

It catalyses the reaction L-glutamate = D-glutamate. It functions in the pathway cell wall biogenesis; peptidoglycan biosynthesis. Functionally, provides the (R)-glutamate required for cell wall biosynthesis. This is Glutamate racemase from Shewanella baltica (strain OS155 / ATCC BAA-1091).